Reading from the N-terminus, the 252-residue chain is Aspartate/glutamate leucyltransferase (252 aa).

The protein belongs to the R-transferase family. Bpt subfamily.

It localises to the cytoplasm. The enzyme catalyses N-terminal L-glutamyl-[protein] + L-leucyl-tRNA(Leu) = N-terminal L-leucyl-L-glutamyl-[protein] + tRNA(Leu) + H(+). It carries out the reaction N-terminal L-aspartyl-[protein] + L-leucyl-tRNA(Leu) = N-terminal L-leucyl-L-aspartyl-[protein] + tRNA(Leu) + H(+). In terms of biological role, functions in the N-end rule pathway of protein degradation where it conjugates Leu from its aminoacyl-tRNA to the N-termini of proteins containing an N-terminal aspartate or glutamate. The protein is Aspartate/glutamate leucyltransferase of Agrobacterium fabrum (strain C58 / ATCC 33970) (Agrobacterium tumefaciens (strain C58)).